The primary structure comprises 911 residues: Protein translocase subunit SecA (911 aa).

Residues Gln90, 108–112 (GEGKT), and Asp515 each bind ATP. 4 residues coordinate Zn(2+): Cys891, Cys893, Cys902, and His903.

The protein belongs to the SecA family. As to quaternary structure, monomer and homodimer. Part of the essential Sec protein translocation apparatus which comprises SecA, SecYEG and auxiliary proteins SecDF-YajC and YidC. Zn(2+) serves as cofactor.

The protein resides in the cell inner membrane. It localises to the cytoplasm. The catalysed reaction is ATP + H2O + cellular proteinSide 1 = ADP + phosphate + cellular proteinSide 2.. Part of the Sec protein translocase complex. Interacts with the SecYEG preprotein conducting channel. Has a central role in coupling the hydrolysis of ATP to the transfer of proteins into and across the cell membrane, serving both as a receptor for the preprotein-SecB complex and as an ATP-driven molecular motor driving the stepwise translocation of polypeptide chains across the membrane. This is Protein translocase subunit SecA from Blochmanniella pennsylvanica (strain BPEN).